We begin with the raw amino-acid sequence, 368 residues long: ASTRA-associated protein 1 (368 aa).

5 WD repeats span residues 12 to 50 (GHSSSVTSVLFDANEYLYSGDEAGFVICWCLTSMRPKCA), 53 to 91 (AHTKTILGMQIVKGGALCTHGRDCRLVTWKIDFNCMTDN), 246 to 283 (SHSQPVLSVEYAGSKLFSTGADDCICLHPTPSSIADDL), 294 to 333 (TKHCGQQNIRIRSDNKILATAGWDGRGRVYSCQTLAPLAV), and 336 to 368 (YHSDGINSLAFHPGSNVIALASKDTRISLWKLY).

Belongs to the WD repeat ASA1 family. As to quaternary structure, component of the ASTRA chromatin-remodeling machinery complex.

The protein resides in the cytoplasm. The protein localises to the nucleus. Its function is as follows. Component of the ASTRA complex probably involved in chromatin remodeling. This chain is ASTRA-associated protein 1 (asa1), found in Schizosaccharomyces pombe (strain 972 / ATCC 24843) (Fission yeast).